The chain runs to 89 residues: Large ribosomal subunit protein bL27 (89 aa).

The interval 1–24 (MAHKKGTGSTRNGRDSNAKRLGVK) is disordered.

Belongs to the bacterial ribosomal protein bL27 family.

The protein is Large ribosomal subunit protein bL27 of Synechococcus sp. (strain JA-2-3B'a(2-13)) (Cyanobacteria bacterium Yellowstone B-Prime).